Reading from the N-terminus, the 548-residue chain is MKFVYAAAGASLVGSALATLPVIEAKVLKACCWTIALDANSYGNKFFYSNNGTEFFIRGVAYQQEYQANGTSTENSDYTDPLANVDNCKRDIPYLKQLRTNVIRTYAVDPTKDHDECMKLLDDAGIYLITDLSAPSESINRADPAWNTDLYKRYTSVIDAFAKYSNVIGFFAGNEVANDNNNTNSIAYVKAAVRDMKSYIKSKDYRSSLLVGYATDDDAHIRADLADYLVCGDKESSIDMFGYNIYEWCGDSSFEKSGYKDRTEEFSKYPVPAFFSEYGCIDPKPRKFTDVAALYGPQMNDVWSGGIVYMYFQEANDYGLVSVSGDNVKTKEDFSYLSVQMQKVTATGVNSASYTASNTAVPTCPSVGAKWEASNKLPPSPNSELCDCMVETLSCTVKDSVDEKEYGDLFDYLCAAGVCGGINSNSTSGDYGAYSVCSAKQKLSFVMNQYYKKNNKAATACDFDGKAQTKKGADASGSCASLISQAGTAGTGSVTAGATGSSGSGSASETSKGAAGVAASPMAVKVGNWQFGAYIATALFAGVGMLVL.

Residues 1–25 (MKFVYAAAGASLVGSALATLPVIEA) form the signal peptide. N-linked (GlcNAc...) asparagine glycosylation is found at asparagine 51 and asparagine 69. Cysteine 88 and cysteine 117 form a disulfide bridge. (1,3-beta-D-glucosyl)n-binding positions include tyrosine 106, 133–141 (SAPSESINR), asparagine 174, and glutamate 175. The active-site Proton donor is the glutamate 175. Asparagine 181 carries N-linked (GlcNAc...) asparagine glycosylation. 2 residues coordinate (1,3-beta-D-glucosyl)n: aspartate 217 and arginine 222. Intrachain disulfides connect cysteine 231–cysteine 364, cysteine 249–cysteine 280, cysteine 386–cysteine 437, cysteine 395–cysteine 461, and cysteine 414–cysteine 419. Glutamate 277 acts as the Nucleophile in catalysis. Tyrosine 309 lines the (1,3-beta-D-glucosyl)n pocket. N-linked (GlcNAc...) asparagine glycosylation occurs at asparagine 425. Alanine 519 carries the GPI-like-anchor amidated alanine lipid modification. The propeptide at 520-548 (SPMAVKVGNWQFGAYIATALFAGVGMLVL) is removed in mature form.

It belongs to the glycosyl hydrolase 72 family. Post-translationally, the GPI-like anchor contains a phosphoceramide lipid group.

Its subcellular location is the cell membrane. Splits internally a 1,3-beta-glucan molecule and transfers the newly generated reducing end (the donor) to the non-reducing end of another 1,3-beta-glucan molecule (the acceptor) forming a 1,3-beta linkage, resulting in the elongation of 1,3-beta-glucan chains in the cell wall. Involved in cell wall morphogenesis. The sequence is that of 1,3-beta-glucanosyltransferase gel4 (gel4) from Aspergillus fumigatus (strain ATCC MYA-4609 / CBS 101355 / FGSC A1100 / Af293) (Neosartorya fumigata).